Consider the following 237-residue polypeptide: Ergosterol biosynthesis protein 29 (237 aa).

A helical membrane pass occupies residues 36 to 56; it reads ITLFLIVVGTLAFFNELYITI.

Its subcellular location is the endoplasmic reticulum membrane. In terms of biological role, part of the third module of ergosterol biosynthesis pathway that includes the late steps of the pathway. ERG29 regulates the activity of the iron-containing C4-methylsterol oxidase ERG25. The third module or late pathway involves the ergosterol synthesis itself through consecutive reactions that mainly occur in the endoplasmic reticulum (ER) membrane. Firstly, the squalene synthase ERG9 catalyzes the condensation of 2 farnesyl pyrophosphate moieties to form squalene, which is the precursor of all steroids. Squalene synthase is crucial for balancing the incorporation of farnesyl diphosphate (FPP) into sterol and nonsterol isoprene synthesis. Secondly, the squalene epoxidase ERG1 catalyzes the stereospecific oxidation of squalene to (S)-2,3-epoxysqualene, which is considered to be a rate-limiting enzyme in steroid biosynthesis. Then, the lanosterol synthase ERG7 catalyzes the cyclization of (S)-2,3 oxidosqualene to lanosterol, a reaction that forms the sterol core. In the next steps, lanosterol is transformed to zymosterol through a complex process involving various demethylation, reduction and desaturation reactions. The lanosterol 14-alpha-demethylase ERG11 (also known as CYP51) catalyzes C14-demethylation of lanosterol to produce 4,4'-dimethyl cholesta-8,14,24-triene-3-beta-ol, which is critical for ergosterol biosynthesis. The C-14 reductase ERG24 reduces the C14=C15 double bond of 4,4-dimethyl-cholesta-8,14,24-trienol to produce 4,4-dimethyl-cholesta-8,24-dienol. 4,4-dimethyl-cholesta-8,24-dienol is substrate of the C-4 demethylation complex ERG25-ERG26-ERG27 in which ERG25 catalyzes the three-step monooxygenation required for the demethylation of 4,4-dimethyl and 4alpha-methylsterols, ERG26 catalyzes the oxidative decarboxylation that results in a reduction of the 3-beta-hydroxy group at the C-3 carbon to an oxo group, and ERG27 is responsible for the reduction of the keto group on the C-3. ERG28 has a role as a scaffold to help anchor ERG25, ERG26 and ERG27 to the endoplasmic reticulum and ERG29 regulates the activity of the iron-containing C4-methylsterol oxidase ERG25. Then, the sterol 24-C-methyltransferase ERG6 catalyzes the methyl transfer from S-adenosyl-methionine to the C-24 of zymosterol to form fecosterol. The C-8 sterol isomerase ERG2 catalyzes the reaction which results in unsaturation at C-7 in the B ring of sterols and thus converts fecosterol to episterol. The sterol-C5-desaturase ERG3 then catalyzes the introduction of a C-5 double bond in the B ring to produce 5-dehydroepisterol. The C-22 sterol desaturase ERG5 further converts 5-dehydroepisterol into ergosta-5,7,22,24(28)-tetraen-3beta-ol by forming the C-22(23) double bond in the sterol side chain. Finally, ergosta-5,7,22,24(28)-tetraen-3beta-ol is substrate of the C-24(28) sterol reductase ERG4 to produce ergosterol. Its function is as follows. Plays a role in maintaining mitochondrial and plasma membrane integrity and consequently impacting the iron homeostasis, respiratory metabolism and antioxidant response. In Saccharomyces cerevisiae (strain ATCC 204508 / S288c) (Baker's yeast), this protein is Ergosterol biosynthesis protein 29.